Consider the following 370-residue polypeptide: Early nodulin-like protein 1 (370 aa).

Positions 1–27 (MSAIMKSLCFSFLILASFATFFSVADA) are cleaved as a signal peptide. The Phytocyanin domain maps to 28-129 (WRFNVGGNGA…GQKLIVVVLA (102 aa)). N58 carries N-linked (GlcNAc...) asparagine glycosylation. A disulfide bond links C83 and C117. Low complexity predominate over residues 135–175 (SAPAHSPVPSVSPTQPPKSHSPVSPVAPASAPSKSQPPRSS). The tract at residues 135 to 347 (SAPAHSPVPS…PAPSPRTNSA (213 aa)) is disordered. Positions 176–194 (VSPAQPPKSSSPISHTPAL) are enriched in polar residues. Low complexity-rich tracts occupy residues 195–205 (SPSHATSHSPA) and 215–290 (SPVS…QSPA). Residues 291 to 305 (TPSPMTPQSPSPVSS) are compositionally biased toward pro residues. Low complexity predominate over residues 306–318 (PSPDQSAAPSDQS). The segment covering 319 to 334 (TPLAPSPSETTPTADN) has biased composition (polar residues). N-linked (GlcNAc...) asparagine glycosylation is present at N334. The GPI-anchor amidated asparagine moiety is linked to residue N345. Residues 346–370 (SASGLAVTSVMSTLFSATFTFLMFA) constitute a propeptide, removed in mature form.

The protein belongs to the early nodulin-like (ENODL) family. Mostly expressed in stems, leaves and flowers, and, to a lower extent, in seedlings, roots and seeds.

The protein resides in the cell membrane. Its function is as follows. May act as a carbohydrate transporter. This Arabidopsis thaliana (Mouse-ear cress) protein is Early nodulin-like protein 1.